A 151-amino-acid polypeptide reads, in one-letter code: MQVILLEKVSNLGNLGEVVRVRDGYARNFLIPQKKARRATDAALKEFEARRVELEKIQAEKLAAAQALGERLNGYQLKVAQKAGVDGRLFGSVTNADIAEGLRTAGFEGVEKSQVRLPNGQLKTVGEFPIQVGLHADVLVDVTVLVEGEMN.

This sequence belongs to the bacterial ribosomal protein bL9 family.

Binds to the 23S rRNA. In Bordetella avium (strain 197N), this protein is Large ribosomal subunit protein bL9.